A 244-amino-acid chain; its full sequence is Salivary antigen-5 (244 aa).

The first 23 residues, 1-23, serve as a signal peptide directing secretion; sequence MAKAHSSLVFCLLALALVRFAQA. The region spanning 46 to 202 is the SCP domain; the sequence is LDFHNKFREL…WYTGYLVCNY (157 aa). Asn-106 and Asn-172 each carry an N-linked (GlcNAc...) asparagine glycan.

Belongs to the CRISP family. Venom allergen 5-like subfamily. In terms of tissue distribution, salivary gland (at protein level).

Its subcellular location is the secreted. Its function is as follows. Inhibits host platelet aggregation induced by low doses of collagen. The sequence is that of Salivary antigen-5 from Triatoma infestans (Assassin bug).